A 255-amino-acid chain; its full sequence is Proteasome subunit alpha type-3 (255 aa).

Position 2 is an N-acetylserine (Ser-2). N6-acetyllysine is present on residues Lys-57, Lys-206, and Lys-230. Ser-243 and Ser-250 each carry phosphoserine.

It belongs to the peptidase T1A family. In terms of assembly, the 26S proteasome consists of a 20S proteasome core and two 19S regulatory subunits. The 20S proteasome core is a barrel-shaped complex made of 28 subunits that are arranged in four stacked rings. The two outer rings are each formed by seven alpha subunits, and the two inner rings are formed by seven beta subunits. The proteolytic activity is exerted by three beta-subunits PSMB5, PSMB6 and PSMB7. Interacts with AURKB. Interacts with CDKN1A. Interacts with MDM2 and RB1. Interacts with the C-terminus of TBXA2R isoform 2. Interacts with DNAJB2. In terms of tissue distribution, detected in liver (at protein level).

The protein localises to the cytoplasm. The protein resides in the nucleus. Its function is as follows. Component of the 20S core proteasome complex involved in the proteolytic degradation of most intracellular proteins. This complex plays numerous essential roles within the cell by associating with different regulatory particles. Associated with two 19S regulatory particles, forms the 26S proteasome and thus participates in the ATP-dependent degradation of ubiquitinated proteins. The 26S proteasome plays a key role in the maintenance of protein homeostasis by removing misfolded or damaged proteins that could impair cellular functions, and by removing proteins whose functions are no longer required. Associated with the PA200 or PA28, the 20S proteasome mediates ubiquitin-independent protein degradation. This type of proteolysis is required in several pathways including spermatogenesis (20S-PA200 complex) or generation of a subset of MHC class I-presented antigenic peptides (20S-PA28 complex). Binds to the C-terminus of CDKN1A and thereby mediates its degradation. Negatively regulates the membrane trafficking of the cell-surface thromboxane A2 receptor (TBXA2R) isoform 2. The chain is Proteasome subunit alpha type-3 (Psma3) from Mus musculus (Mouse).